A 157-amino-acid chain; its full sequence is Mediator of RNA polymerase II transcription subunit 10 (157 aa).

It belongs to the Mediator complex subunit 10 family. Component of the Mediator complex, which is composed of at least 21 subunits that form three structurally distinct submodules. The Mediator head module contains MED6, MED8, MED11, SRB4/MED17, SRB5/MED18, ROX3/MED19, SRB2/MED20 and SRB6/MED22, the middle module contains MED1, MED4, NUT1/MED5, MED7, CSE2/MED9, NUT2/MED10, SRB7/MED21 and SOH1/MED31, and the tail module contains MED2, PGD1/MED3, RGR1/MED14, GAL11/MED15 and SIN4/MED16. The head and the middle modules interact directly with RNA polymerase II, whereas the elongated tail module interacts with gene-specific regulatory proteins. NUT2/MED10 interacts directly with SRB7/MED21.

The protein resides in the nucleus. Component of the Mediator complex, a coactivator involved in the regulated transcription of nearly all RNA polymerase II-dependent genes. Mediator functions as a bridge to convey information from gene-specific regulatory proteins to the basal RNA polymerase II transcription machinery. The Mediator complex, having a compact conformation in its free form, is recruited to promoters by direct interactions with regulatory proteins and serves for the assembly of a functional preinitiation complex with RNA polymerase II and the general transcription factors. The Mediator complex unfolds to an extended conformation and partially surrounds RNA polymerase II, specifically interacting with the unphosphorylated form of the C-terminal domain (CTD) of RNA polymerase II. The Mediator complex dissociates from the RNA polymerase II holoenzyme and stays at the promoter when transcriptional elongation begins. This chain is Mediator of RNA polymerase II transcription subunit 10 (NUT2), found in Saccharomyces cerevisiae (strain ATCC 204508 / S288c) (Baker's yeast).